The sequence spans 301 residues: Protein p34 (301 aa).

5 consecutive transmembrane segments (helical) span residues 15-35 (YLSV…WVVT), 40-60 (ILAA…NLIA), 83-103 (TIFS…FSSV), 120-140 (TVMY…TYVI), and 171-191 (LSDY…LYIF).

The protein belongs to the cation diffusion facilitator (CDF) transporter (TC 2.A.4) family.

It localises to the cell membrane. The polypeptide is Protein p34 (p34) (Rickettsia rickettsii (strain Sheila Smith)).